The following is a 796-amino-acid chain: MVVLRPKITLTSVRGRIQVTAEDGERVGPWGGTECFLSRQTGQGPCLVVRSSRHKRHQGTFFRLEGVRQVLSLYAMEGKLTVVVPHQKRLCSVFIETFADVDALQMMAATLQDRSRWKDIEKNVACRVQRITRTNVVDTKRITNMDGGTDTHLDYKQFEWGGGEDDSCAVGGVSCNPLEGARGERNGDGVESILQERPTGLPSAHSGGKLPKHMGGDELNPQLEGSTTPGRMQWTTDQIVATRLVCTGSNVFITGSAGTGKTEWLLHLVRNVLPRDDRTVVTASTGMSARLLGGCTIHSFAGIGRGEGGFNRVYNRVKSKPEVVRAWRQCQTLIIDEIGNISPDTFSMIDEIARSLRGAPEKPFGGIQVILLGDFLQLPPVDSPKARNEWTNGNDTDTDSNPIPGKLKWCFETATWESLKLALVGFRKSYRQMNDPDFALCLEDIRFGRYTRRVERILNECSTRQIKERHGIEPTLIVARRDEATEYNAERLKMLEDVHFHRYESEDYAAIPGMNLEKEVSLQQLLELRIGAQVVLLASLPDAPHLSNGDQGVVVSFAEQTRGPALPVVCFATSGGEEVLVPRVSMEVLGPEGRVIATRTQIPLQLSWAITVHRAQGMTLPLVSVRLNKCFFDCGQAYVALSRVRSREDLMLTAFDPSAIFADARAVAFYEKNFPAQRQSVEDTECELVPIKGKTRAKHPRSQGEKNSVDEGGNAPEEHPLRTDAAFTAYHDLDSQVSTDMPLVPQPPRKKRMLVEELPQVTSSAIPNFTQESNNGDANSQLQHPFSQNNLMVDDD.

The disordered stretch occupies residues arginine 197 to glycine 230. Residue glycine 255–threonine 262 coordinates ATP. The DNA-binding element occupies glutamine 636 to phenylalanine 655. Disordered stretches follow at residues lysine 692–histidine 719 and threonine 762–aspartate 796.

The protein belongs to the helicase family. PIF1 subfamily. Monomer. Mg(2+) serves as cofactor.

It is found in the nucleus. It carries out the reaction Couples ATP hydrolysis with the unwinding of duplex DNA at the replication fork by translocating in the 5'-3' direction. This creates two antiparallel DNA single strands (ssDNA). The leading ssDNA polymer is the template for DNA polymerase III holoenzyme which synthesizes a continuous strand.. The catalysed reaction is ATP + H2O = ADP + phosphate + H(+). DNA-dependent ATPase and 5'-3' DNA helicase required for the maintenance of genome stability. The sequence is that of ATP-dependent DNA helicase PIF6 from Trypanosoma brucei brucei (strain 927/4 GUTat10.1).